Here is a 126-residue protein sequence, read N- to C-terminus: Aspartate 1-decarboxylase (126 aa).

The active-site Schiff-base intermediate with substrate; via pyruvic acid is the Ser25. Position 25 is a pyruvic acid (Ser) (Ser25). Substrate is bound at residue Thr57. Tyr58 acts as the Proton donor in catalysis. 73-75 (GAA) contacts substrate.

This sequence belongs to the PanD family. Heterooctamer of four alpha and four beta subunits. It depends on pyruvate as a cofactor. Is synthesized initially as an inactive proenzyme, which is activated by self-cleavage at a specific serine bond to produce a beta-subunit with a hydroxyl group at its C-terminus and an alpha-subunit with a pyruvoyl group at its N-terminus.

It is found in the cytoplasm. It carries out the reaction L-aspartate + H(+) = beta-alanine + CO2. Its pathway is cofactor biosynthesis; (R)-pantothenate biosynthesis; beta-alanine from L-aspartate: step 1/1. In terms of biological role, catalyzes the pyruvoyl-dependent decarboxylation of aspartate to produce beta-alanine. This is Aspartate 1-decarboxylase from Photorhabdus laumondii subsp. laumondii (strain DSM 15139 / CIP 105565 / TT01) (Photorhabdus luminescens subsp. laumondii).